A 369-amino-acid polypeptide reads, in one-letter code: Carbamoyl phosphate synthase small chain (369 aa).

Positions 1–168 (MYGILVLEDG…KKVVKYPAKD (168 aa)) are CPSase. L-glutamine-binding residues include serine 45, glycine 220, and glycine 222. The region spanning 172–364 (SCVVIDCGVK…VALGMKFKQE (193 aa)) is the Glutamine amidotransferase type-1 domain. The active-site Nucleophile is the cysteine 247. Leucine 248, glutamine 251, asparagine 289, glycine 291, and phenylalanine 292 together coordinate L-glutamine. Active-site residues include histidine 337 and glutamate 339.

Belongs to the CarA family. In terms of assembly, composed of two chains; the small (or glutamine) chain promotes the hydrolysis of glutamine to ammonia, which is used by the large (or ammonia) chain to synthesize carbamoyl phosphate. Tetramer of heterodimers (alpha,beta)4.

It carries out the reaction hydrogencarbonate + L-glutamine + 2 ATP + H2O = carbamoyl phosphate + L-glutamate + 2 ADP + phosphate + 2 H(+). The catalysed reaction is L-glutamine + H2O = L-glutamate + NH4(+). Its pathway is amino-acid biosynthesis; L-arginine biosynthesis; carbamoyl phosphate from bicarbonate: step 1/1. It functions in the pathway pyrimidine metabolism; UMP biosynthesis via de novo pathway; (S)-dihydroorotate from bicarbonate: step 1/3. Its function is as follows. Small subunit of the glutamine-dependent carbamoyl phosphate synthetase (CPSase). CPSase catalyzes the formation of carbamoyl phosphate from the ammonia moiety of glutamine, carbonate, and phosphate donated by ATP, constituting the first step of 2 biosynthetic pathways, one leading to arginine and/or urea and the other to pyrimidine nucleotides. The small subunit (glutamine amidotransferase) binds and cleaves glutamine to supply the large subunit with the substrate ammonia. In Methanococcus vannielii (strain ATCC 35089 / DSM 1224 / JCM 13029 / OCM 148 / SB), this protein is Carbamoyl phosphate synthase small chain.